Here is a 588-residue protein sequence, read N- to C-terminus: Pescadillo homolog (588 aa).

The BRCT domain occupies 344–437 (PVSTLFSDFV…KLVPANLYLP (94 aa)). Disordered stretches follow at residues 446 to 533 (SPWG…EAEE) and 559 to 588 (KKEEKVENLKKKKKQISKTKEKLTKLEGKK). Residues 460 to 493 (DAEEEGEDDEDEDSEEGSGAEVEENVDEDEDDEE) show a composition bias toward acidic residues. Composition is skewed to basic and acidic residues over residues 510-519 (SDIKDTEVKS) and 576-588 (KTKEKLTKLEGKK). Positions 512–588 (IKDTEVKSKN…EKLTKLEGKK (77 aa)) form a coiled coil.

This sequence belongs to the pescadillo family. In terms of assembly, component of the NOP7 complex, composed of ERB1, NOP7 and YTM1. The complex is held together by ERB1, which interacts with NOP7 via its N-terminal domain and with YTM1 via a high-affinity interaction between the seven-bladed beta-propeller domains of the 2 proteins. The NOP7 complex associates with the 66S pre-ribosome.

The protein resides in the nucleus. Its subcellular location is the nucleolus. The protein localises to the nucleoplasm. Component of the NOP7 complex, which is required for maturation of the 25S and 5.8S ribosomal RNAs and formation of the 60S ribosome. The chain is Pescadillo homolog from Vanderwaltozyma polyspora (strain ATCC 22028 / DSM 70294 / BCRC 21397 / CBS 2163 / NBRC 10782 / NRRL Y-8283 / UCD 57-17) (Kluyveromyces polysporus).